Here is a 216-residue protein sequence, read N- to C-terminus: Protein Syd (216 aa).

Belongs to the Syd family.

Its subcellular location is the cell inner membrane. Functionally, interacts with the SecY protein in vivo. May bind preferentially to an uncomplexed state of SecY, thus functioning either as a chelating agent for excess SecY in the cell or as a regulatory factor that negatively controls the translocase function. The chain is Protein Syd from Shewanella putrefaciens (strain CN-32 / ATCC BAA-453).